We begin with the raw amino-acid sequence, 76 residues long: Defensin-like protein 125 (76 aa).

Residues 1–25 (MTKAITLAIFMVVLVLGMVTKETQG) form the signal peptide. 4 cysteine pairs are disulfide-bonded: Cys-30–Cys-74, Cys-41–Cys-60, Cys-46–Cys-68, and Cys-50–Cys-70.

Belongs to the DEFL family.

The protein localises to the secreted. This Arabidopsis thaliana (Mouse-ear cress) protein is Defensin-like protein 125 (LCR54).